The primary structure comprises 69 residues: Alpha-conotoxin Mr1.7a (69 aa).

The first 21 residues, 1-21 (MGMRMMFTVFLLVVLATTVVS), serve as a signal peptide directing secretion. Residues 22 to 49 (FTSNRVLDPAFRRRNAAAKASDLIALNA) constitute a propeptide that is removed on maturation. 4-hydroxyproline; in Mr1.7b occurs at positions 52 and 58. Intrachain disulfides connect cysteine 54-cysteine 60 and cysteine 55-cysteine 68. Residues 56 to 58 (THP) are lacks the Ser-Xaa-Pro motif that is crucial for potent interaction with nAChR. Cysteine 68 carries the cysteine amide modification.

Belongs to the conotoxin A superfamily. In terms of processing, two 4-hydroxyprolines have been detected by MS but the assignment of which of the three prolines is modified is uncertain. In terms of tissue distribution, expressed by the venom duct.

The protein resides in the secreted. Functionally, acts as a co-agonist with PNU (an alpha-7 nAChR-selective allosteric modulator) at the endogenous alpha-7/CHRNA7 nicotinic acetylcholine receptors (nAChR) when tested in human SH-SY5Y neuroblastoma cells. Is the third alpha-conotoxin that acts as an agonist (after alpha-conotoxin SrIA/SrIB). Also acts as an antagonist at human alpha-7 nAChRs heterologously expressed in Xenopus oocytes. Has possibly a distinct nAChR binding mode from other alpha-conotoxins, due to a different three residue motif (lacks the Ser-Xaa-Pro motif). In terms of biological role, acts as a weak partial agonist at alpha-7/CHRNA7 nicotinic acetylcholine receptors (nAChR) when tested in human SH-SY5Y neuroblastoma cells. Has possibly a distinct nAChR binding mode from other alpha-conotoxins, due to a different three residue motif (lacks the Ser-Xaa-Pro motif). The sequence is that of Alpha-conotoxin Mr1.7a from Conus marmoreus (Marble cone).